Consider the following 545-residue polypeptide: Germacrene D synthase 1 (545 aa).

Residues Asp-298, Asp-302, Asn-443, and Glu-451 each coordinate Mg(2+). The DDXXD motif motif lies at 298–302; it reads DDTFD.

The protein belongs to the terpene synthase family. The cofactor is Mg(2+).

The protein resides in the cytoplasm. It is found in the cytosol. The catalysed reaction is (2E,6E)-farnesyl diphosphate = (-)-germacrene D + diphosphate. The protein operates within secondary metabolite biosynthesis; terpenoid biosynthesis. Sesquiterpene synthase involved in germacrene D biosynthesis. Also produces at least 13 additional sesquiterpene products, including germacrene C and (+)-germacrene A, beta-ylangene, (E)-beta-farnesene and (E,E)-alpha-farnesene. This is Germacrene D synthase 1 from Pogostemon cablin (Patchouli).